The primary structure comprises 472 residues: Envelope glycoprotein O (472 aa).

An N-terminal signal peptide occupies residues Met-1 to Cys-31. N-linked (GlcNAc...) asparagine; by host glycosylation is found at Asn-109, Asn-136, Asn-163, Asn-168, Asn-177, Asn-225, Asn-248, Asn-294, Asn-298, Asn-356, Asn-391, Asn-398, Asn-405, Asn-439, and Asn-460.

It belongs to the herpesviridae U47 family. Forms the envelope trimer complex composed of gH, gL, and gO. The trimer interacts with host PDGFRA. N-glycosylated. Post-translationally, the N-terminus is blocked.

It is found in the virion membrane. Plays a role in viral entry into host cells. Forms a trimeric complex at the surface of the viral envelope together with gH and gL. This complex is required for entry in host fibroblasts. Mechanistically, engages host receptor(s) including PDGFRA to mediate infection. The chain is Envelope glycoprotein O (UL74) from Human cytomegalovirus (strain Merlin) (HHV-5).